The following is an 847-amino-acid chain: Alanine--tRNA ligase (847 aa).

4 residues coordinate Zn(2+): histidine 554, histidine 558, cysteine 656, and histidine 660.

Belongs to the class-II aminoacyl-tRNA synthetase family. Zn(2+) serves as cofactor.

The protein resides in the cytoplasm. The enzyme catalyses tRNA(Ala) + L-alanine + ATP = L-alanyl-tRNA(Ala) + AMP + diphosphate. Catalyzes the attachment of alanine to tRNA(Ala) in a two-step reaction: alanine is first activated by ATP to form Ala-AMP and then transferred to the acceptor end of tRNA(Ala). Also edits incorrectly charged Ser-tRNA(Ala) and Gly-tRNA(Ala) via its editing domain. This Helicobacter pylori (strain J99 / ATCC 700824) (Campylobacter pylori J99) protein is Alanine--tRNA ligase.